The chain runs to 655 residues: Threonine--tRNA ligase (655 aa).

One can recognise a TGS domain in the interval 1-66 (MIDLVFPDGS…TGERKFEILT (66 aa)). Residues 248 to 540 (DHRKLGKTMD…LLENFAGALP (293 aa)) are catalytic. Zn(2+) contacts are provided by C340, H391, and H517.

Belongs to the class-II aminoacyl-tRNA synthetase family. In terms of assembly, homodimer. It depends on Zn(2+) as a cofactor.

The protein resides in the cytoplasm. It carries out the reaction tRNA(Thr) + L-threonine + ATP = L-threonyl-tRNA(Thr) + AMP + diphosphate + H(+). Functionally, catalyzes the attachment of threonine to tRNA(Thr) in a two-step reaction: L-threonine is first activated by ATP to form Thr-AMP and then transferred to the acceptor end of tRNA(Thr). Also edits incorrectly charged L-seryl-tRNA(Thr). The protein is Threonine--tRNA ligase of Caulobacter vibrioides (strain ATCC 19089 / CIP 103742 / CB 15) (Caulobacter crescentus).